The chain runs to 172 residues: Peptidyl-prolyl cis-trans isomerase (172 aa).

Residues 10–168 (YFDVYANEES…YRIEIRDCGV (159 aa)) enclose the PPIase cyclophilin-type domain.

It belongs to the cyclophilin-type PPIase family.

The protein localises to the cytoplasm. It catalyses the reaction [protein]-peptidylproline (omega=180) = [protein]-peptidylproline (omega=0). Its function is as follows. PPIases accelerate the folding of proteins. They catalyze the cis-trans isomerization of proline imidic peptide bonds in oligopeptides. The sequence is that of Peptidyl-prolyl cis-trans isomerase (CPR1) from Encephalitozoon cuniculi (strain GB-M1) (Microsporidian parasite).